Consider the following 282-residue polypeptide: BTB/POZ domain-containing protein At3g56230 (282 aa).

Basic and acidic residues predominate over residues 40 to 50 (GSKEDRHDKSN). The interval 40 to 66 (GSKEDRHDKSNHNSTINNGSSISSSPL) is disordered. The span at 51-64 (HNSTINNGSSISSS) shows a compositional bias: low complexity. The region spanning 111 to 181 (ADILLKPGDD…LYTGTLASDK (71 aa)) is the BTB domain.

It participates in protein modification; protein ubiquitination. May act as a substrate-specific adapter of an E3 ubiquitin-protein ligase complex (CUL3-RBX1-BTB) which mediates the ubiquitination and subsequent proteasomal degradation of target proteins. In Arabidopsis thaliana (Mouse-ear cress), this protein is BTB/POZ domain-containing protein At3g56230.